We begin with the raw amino-acid sequence, 160 residues long: UPF0262 protein Mrad2831_3513 (160 aa).

Belongs to the UPF0262 family.

The sequence is that of UPF0262 protein Mrad2831_3513 from Methylobacterium radiotolerans (strain ATCC 27329 / DSM 1819 / JCM 2831 / NBRC 15690 / NCIMB 10815 / 0-1).